The following is a 354-amino-acid chain: MELLMCSGQAESGGSSSTESSSLSGGLRFGQKIYFEDGSGSRSKNRVNTVRKSSTTARCQVEGCRMDLSNVKAYYSRHKVCCIHSKSSKVIVSGLHQRFCQQCSRFHQLSEFDLEKRSCRRRLACHNERRRKPQPTTALFTSHYSRIAPSLYGNPNAAMIKSVLGDPTAWSTARSVMQRPGPWQINPVRETHPHMNVLSHGSSSFTTCPEMINNNSTDSSCALSLLSNSYPIHQQQLQTPTNTWRPSSGFDSMISFSDKVTMAQPPPISTHQPPISTHQQYLSQTWEVIAGEKSNSHYMSPVSQISEPADFQISNGTTMGGFELYLHQQVLKQYMEPENTRAYDSSPQHFNWSL.

Positions 1–25 (MELLMCSGQAESGGSSSTESSSLSG) are disordered. A compositionally biased stretch (low complexity) spans 7-25 (SGQAESGGSSSTESSSLSG). An SBP-type zinc finger spans residues 56–133 (TARCQVEGCR…ACHNERRRKP (78 aa)). Zn(2+)-binding residues include cysteine 59, cysteine 64, cysteine 81, histidine 84, cysteine 100, cysteine 103, histidine 107, and cysteine 119. The short motif at 116 to 132 (KRSCRRRLACHNERRRK) is the Bipartite nuclear localization signal element.

Zn(2+) is required as a cofactor.

It localises to the nucleus. Its function is as follows. Trans-acting factor that binds specifically to the consensus nucleotide sequence 5'-TNCGTACAA-3'. The protein is Squamosa promoter-binding-like protein 15 (SPL15) of Arabidopsis thaliana (Mouse-ear cress).